A 75-amino-acid polypeptide reads, in one-letter code: DNA-directed RNA polymerase subunit Rpo6 (75 aa).

Belongs to the archaeal Rpo6/eukaryotic RPB6 RNA polymerase subunit family. In terms of assembly, part of the RNA polymerase complex.

It is found in the cytoplasm. It catalyses the reaction RNA(n) + a ribonucleoside 5'-triphosphate = RNA(n+1) + diphosphate. Functionally, DNA-dependent RNA polymerase (RNAP) catalyzes the transcription of DNA into RNA using the four ribonucleoside triphosphates as substrates. This Archaeoglobus fulgidus (strain ATCC 49558 / DSM 4304 / JCM 9628 / NBRC 100126 / VC-16) protein is DNA-directed RNA polymerase subunit Rpo6.